The following is a 484-amino-acid chain: tRNA-2-methylthio-N(6)-dimethylallyladenosine synthase (484 aa).

The 121-residue stretch at 29–149 folds into the MTTase N-terminal domain; it reads GVFHIHTLGC…LPKLLDQNRA (121 aa). C38, C78, C112, C186, C190, and C193 together coordinate [4Fe-4S] cluster. Residues 172–401 enclose the Radical SAM core domain; it reads RASRISSWVA…VALQEQITEE (230 aa). A TRAM domain is found at 404–474; sequence ATFEGRDVEV…RHNLLADPDV (71 aa).

It belongs to the methylthiotransferase family. MiaB subfamily. As to quaternary structure, monomer. It depends on [4Fe-4S] cluster as a cofactor.

It localises to the cytoplasm. It catalyses the reaction N(6)-dimethylallyladenosine(37) in tRNA + (sulfur carrier)-SH + AH2 + 2 S-adenosyl-L-methionine = 2-methylsulfanyl-N(6)-dimethylallyladenosine(37) in tRNA + (sulfur carrier)-H + 5'-deoxyadenosine + L-methionine + A + S-adenosyl-L-homocysteine + 2 H(+). Catalyzes the methylthiolation of N6-(dimethylallyl)adenosine (i(6)A), leading to the formation of 2-methylthio-N6-(dimethylallyl)adenosine (ms(2)i(6)A) at position 37 in tRNAs that read codons beginning with uridine. This Bifidobacterium longum (strain DJO10A) protein is tRNA-2-methylthio-N(6)-dimethylallyladenosine synthase.